Here is a 238-residue protein sequence, read N- to C-terminus: Glutamine amidotransferase-like protein chyE (238 aa).

Residues 8 to 238 (KIAVLINTPP…LERVLQWLSE (231 aa)) enclose the Glutamine amidotransferase type-1 domain. Residue cysteine 102 is the Nucleophile of the active site. Catalysis depends on residues histidine 189 and glutamate 191.

It belongs to the peptidase C26 family.

It participates in pigment biosynthesis. In terms of biological role, glutamine amidotransferase-like protein; part of the gene cluster that mediates the biosynthesis of the yellow pigment chrysogine. the NRPS chyA mediates the condensation of anthranilic acid and alanine into the intermediate 2-(2-aminopropanamido)benzoic acid. The remainder of the pathway is highly branched yielding at least 13 chrysogine-related compounds. The malonyl transferase chyE converts 2-(2-aminopropanamido)benzoic acid and 2-(2-aminopropanamido)benzamidine into 2-(2-(2-carboxyacetamido)propanamido)benzoic acid and 3-((1-((2-carbamoylphenyl)amino)-1-oxopropan-2-yl)amino)-3-oxopropanoic acid, respectively. ChyD is an amidase, being responsible for the amidation of the carboxylic acid moiety of 2-(2-aminopropanamido)benzoic acid, 2-(2-(2-carboxyacetamido)propanamido)benzoic acid and 2-(2-((4-amino-1-carboxy-4-oxobutyl)amino)propanamido)benzoic acid. ChyC is involved in the same reactions as ChyD, but plays a more minor role in the amidation reactions compared to chyD. The oxidoreductases chyH and chyM are involved in oxidation reactions that form N-pyruvoylanthranilamide from 2-(2-aminopropanamido)benzamidine and (1-((2-carbamoylphenyl)amino)-1-oxopropan-2-yl)glutamine, respectively. N-pyruvoylanthranilamide is further converted via two further branches in the pathway, yielding chrysogine and additional chrysogine-related coumpounds. Chrysogine is likely formed by a spontaneous ring closure from N-pyruvoylanthranilamide. This is Glutamine amidotransferase-like protein chyE from Penicillium rubens (strain ATCC 28089 / DSM 1075 / NRRL 1951 / Wisconsin 54-1255) (Penicillium chrysogenum).